A 316-amino-acid polypeptide reads, in one-letter code: Apolipoprotein E (316 aa).

The N-terminal stretch at 1–18 is a signal peptide; it reads MKALWAVLVVTLLAGCLA. A run of 8 repeats spans residues 76 to 97, 98 to 119, 120 to 141, 142 to 163, 164 to 185, 186 to 207, 208 to 229, and 230 to 251. The interval 76–251 is 8 X 22 AA approximate tandem repeats; that stretch reads VLMEDTMTEL…RLEEVREQME (176 aa). A Methionine sulfoxide modification is found at methionine 139. Serine 143 is subject to Phosphoserine. An LDL and other lipoprotein receptors binding region spans residues 154 to 164; the sequence is HLRKLRKRLMR. Position 158–161 (158–161) interacts with heparin; the sequence is LRKR. Residues 206 to 286 are lipid-binding and lipoprotein association; it reads TANLGAGAGK…GWFEPLVEDM (81 aa). 225 to 232 contributes to the heparin binding site; that stretch reads GARIRGRL. The interval 262–316 is homooligomerization; it reads QQMRLQAEIFQARLKGWFEPLVEDMQRQWANLVEKIQASVAANPIPPSSVPQESQ. The segment at 274–286 is specificity for association with VLDL; that stretch reads RLKGWFEPLVEDM.

It belongs to the apolipoprotein A1/A4/E family. Homotetramer. May interact with ABCA1; functionally associated with ABCA1 in the biogenesis of HDLs. May interact with APP/A4 amyloid-beta peptide; the interaction is extremely stable in vitro but its physiological significance is unclear. May interact with MAPT. May interact with MAP2. In the cerebrospinal fluid, interacts with secreted SORL1. Interacts with PMEL; this allows the loading of PMEL luminal fragment on ILVs to induce fibril nucleation. APOE exists as multiple glycosylated and sialylated glycoforms within cells and in plasma. The extent of glycosylation and sialylation are tissue and context specific. Post-translationally, glycated in plasma VLDL. In terms of processing, phosphorylated by FAM20C in the extracellular medium.

It is found in the secreted. Its subcellular location is the extracellular space. It localises to the extracellular matrix. The protein resides in the extracellular vesicle. The protein localises to the endosome. It is found in the multivesicular body. Its function is as follows. APOE is an apolipoprotein, a protein associating with lipid particles, that mainly functions in lipoprotein-mediated lipid transport between organs via the plasma and interstitial fluids. APOE is a core component of plasma lipoproteins and is involved in their production, conversion and clearance. Apolipoproteins are amphipathic molecules that interact both with lipids of the lipoprotein particle core and the aqueous environment of the plasma. As such, APOE associates with chylomicrons, chylomicron remnants, very low density lipoproteins (VLDL) and intermediate density lipoproteins (IDL) but shows a preferential binding to high-density lipoproteins (HDL). It also binds a wide range of cellular receptors including the LDL receptor/LDLR, the LDL receptor-related proteins LRP1, LRP2 and LRP8 and the very low-density lipoprotein receptor/VLDLR that mediate the cellular uptake of the APOE-containing lipoprotein particles. Finally, APOE also has a heparin-binding activity and binds heparan-sulfate proteoglycans on the surface of cells, a property that supports the capture and the receptor-mediated uptake of APOE-containing lipoproteins by cells. A main function of APOE is to mediate lipoprotein clearance through the uptake of chylomicrons, VLDLs, and HDLs by hepatocytes. APOE is also involved in the biosynthesis by the liver of VLDLs as well as their uptake by peripheral tissues ensuring the delivery of triglycerides and energy storage in muscle, heart and adipose tissues. By participating in the lipoprotein-mediated distribution of lipids among tissues, APOE plays a critical role in plasma and tissues lipid homeostasis. APOE is also involved in two steps of reverse cholesterol transport, the HDLs-mediated transport of cholesterol from peripheral tissues to the liver, and thereby plays an important role in cholesterol homeostasis. First, it is functionally associated with ABCA1 in the biogenesis of HDLs in tissues. Second, it is enriched in circulating HDLs and mediates their uptake by hepatocytes. APOE also plays an important role in lipid transport in the central nervous system, regulating neuron survival and sprouting. The chain is Apolipoprotein E (Apoe) from Onychomys torridus (Southern grasshopper mouse).